Consider the following 81-residue polypeptide: ATP synthase subunit c (81 aa).

2 helical membrane-spanning segments follow: residues 3–23 (PLIA…GAIG) and 57–77 (LAFM…LLFA).

The protein belongs to the ATPase C chain family. F-type ATPases have 2 components, F(1) - the catalytic core - and F(0) - the membrane proton channel. F(1) has five subunits: alpha(3), beta(3), gamma(1), delta(1), epsilon(1). F(0) has four main subunits: a(1), b(1), b'(1) and c(10-14). The alpha and beta chains form an alternating ring which encloses part of the gamma chain. F(1) is attached to F(0) by a central stalk formed by the gamma and epsilon chains, while a peripheral stalk is formed by the delta, b and b' chains.

The protein localises to the cellular thylakoid membrane. Its function is as follows. F(1)F(0) ATP synthase produces ATP from ADP in the presence of a proton or sodium gradient. F-type ATPases consist of two structural domains, F(1) containing the extramembraneous catalytic core and F(0) containing the membrane proton channel, linked together by a central stalk and a peripheral stalk. During catalysis, ATP synthesis in the catalytic domain of F(1) is coupled via a rotary mechanism of the central stalk subunits to proton translocation. Functionally, key component of the F(0) channel; it plays a direct role in translocation across the membrane. A homomeric c-ring of between 10-14 subunits forms the central stalk rotor element with the F(1) delta and epsilon subunits. In Trichodesmium erythraeum (strain IMS101), this protein is ATP synthase subunit c.